Here is a 123-residue protein sequence, read N- to C-terminus: Large ribosomal subunit protein uL14 (123 aa).

This sequence belongs to the universal ribosomal protein uL14 family. Part of the 50S ribosomal subunit. Forms a cluster with proteins L3 and L19. In the 70S ribosome, L14 and L19 interact and together make contacts with the 16S rRNA in bridges B5 and B8.

In terms of biological role, binds to 23S rRNA. Forms part of two intersubunit bridges in the 70S ribosome. This is Large ribosomal subunit protein uL14 from Chromohalobacter salexigens (strain ATCC BAA-138 / DSM 3043 / CIP 106854 / NCIMB 13768 / 1H11).